A 457-amino-acid polypeptide reads, in one-letter code: RuvB-like helicase 1 (457 aa).

Position 73–80 (73–80 (GGPSTGKT)) interacts with ATP.

It belongs to the RuvB family. In terms of assembly, may form heterododecamers with RVB2. Component of the SWR1 chromatin remodeling complex, the INO80 chromatin remodeling complex, and of the R2TP complex.

It localises to the nucleus. It catalyses the reaction ATP + H2O = ADP + phosphate + H(+). In terms of biological role, DNA helicase which participates in several chromatin remodeling complexes, including the SWR1 and the INO80 complexes. The SWR1 complex mediates the ATP-dependent exchange of histone H2A for the H2A variant HZT1 leading to transcriptional regulation of selected genes by chromatin remodeling. The INO80 complex remodels chromatin by shifting nucleosomes and is involved in DNA repair. Also involved in pre-rRNA processing. This is RuvB-like helicase 1 (RVB1) from Kluyveromyces lactis (strain ATCC 8585 / CBS 2359 / DSM 70799 / NBRC 1267 / NRRL Y-1140 / WM37) (Yeast).